Here is a 613-residue protein sequence, read N- to C-terminus: Vitamin B12 transporter BtuB (613 aa).

The first 22 residues, 1–22 (MQKSLLAIAMASLLTPISYLHA), serve as a signal peptide directing secretion. Residues 29–36 (DTVVVTAN) carry the TonB box motif. A TBDR plug domain is found at 41 to 154 (VESSVLASIS…IGGVIHIKTI (114 aa)). Residues 159–613 (QTKHDANLGY…NWFATVNYRF (455 aa)) enclose the TBDR beta-barrel domain. A TonB C-terminal box motif is present at residues 591–613 (HSSGGKYYVGEGRNWFATVNYRF).

Belongs to the TonB-dependent receptor family. BtuB (TC 1.B.14.3.1) subfamily.

It is found in the cell outer membrane. In terms of biological role, involved in the active translocation of vitamin B12 (cyanocobalamin) across the outer membrane to the periplasmic space. It derives its energy for transport by interacting with the trans-periplasmic membrane protein TonB. This is Vitamin B12 transporter BtuB from Vibrio vulnificus (strain YJ016).